The chain runs to 362 residues: 3-dehydroquinate synthase (362 aa).

NAD(+) is bound by residues D71–K76, G105–D109, T129–T130, K142, K151, and C169–T172. Residues E184, H247, and H264 each coordinate Zn(2+).

Belongs to the sugar phosphate cyclases superfamily. Dehydroquinate synthase family. Co(2+) is required as a cofactor. Requires Zn(2+) as cofactor. NAD(+) serves as cofactor.

Its subcellular location is the cytoplasm. It carries out the reaction 7-phospho-2-dehydro-3-deoxy-D-arabino-heptonate = 3-dehydroquinate + phosphate. It functions in the pathway metabolic intermediate biosynthesis; chorismate biosynthesis; chorismate from D-erythrose 4-phosphate and phosphoenolpyruvate: step 2/7. Functionally, catalyzes the conversion of 3-deoxy-D-arabino-heptulosonate 7-phosphate (DAHP) to dehydroquinate (DHQ). The chain is 3-dehydroquinate synthase from Cronobacter sakazakii (strain ATCC BAA-894) (Enterobacter sakazakii).